The primary structure comprises 218 residues: Small ribosomal subunit protein uS3 (218 aa).

A KH type-2 domain is found at 38–106; it reads LRSDLKKKLM…PVHLNIEEVK (69 aa).

Belongs to the universal ribosomal protein uS3 family. Part of the 30S ribosomal subunit. Forms a tight complex with proteins S10 and S14.

Functionally, binds the lower part of the 30S subunit head. Binds mRNA in the 70S ribosome, positioning it for translation. The sequence is that of Small ribosomal subunit protein uS3 from Legionella pneumophila (strain Lens).